An 81-amino-acid polypeptide reads, in one-letter code: Serine rich endogenous peptide 21 (81 aa).

Positions 1-40 (MLELHFEFIDLNQPKMYKFVVCLLTLSFLLLSGLSNTALA) are cleaved as a signal peptide. The SCOOP motif signature appears at 65–79 (KVRVLPSASRRGPGQ). The SxS motif essential for MIK2 binding motif lies at 71 to 73 (SAS).

This sequence belongs to the serine rich endogenous peptide (SCOOP) phytocytokine family. In terms of assembly, interacts with MIK2 (via extracellular leucine-rich repeat domain); this interaction triggers the formation of complex between MIK2 and the BAK1/SERK3 and SERK4 coreceptors, and subsequent BAK1 activation by phosphorylation.

It localises to the cell membrane. The protein localises to the secreted. Its subcellular location is the extracellular space. The protein resides in the apoplast. Functionally, brassicaceae-specific phytocytokine (plant endogenous peptide released into the apoplast) perceived by MIK2 in a BAK1/SERK3 and SERK4 coreceptors-dependent manner, that modulates various physiological and antimicrobial processes including growth prevention and reactive oxygen species (ROS) response regulation. In Arabidopsis thaliana (Mouse-ear cress), this protein is Serine rich endogenous peptide 21.